Here is a 453-residue protein sequence, read N- to C-terminus: Tol-Pal system protein TolB (453 aa).

The signal sequence occupies residues 1–31 (MINNLSVSMTKVLKIILTIIIILFNTLSILA).

Belongs to the TolB family. The Tol-Pal system is composed of five core proteins: the inner membrane proteins TolA, TolQ and TolR, the periplasmic protein TolB and the outer membrane protein Pal. They form a network linking the inner and outer membranes and the peptidoglycan layer.

It is found in the periplasm. Its function is as follows. Part of the Tol-Pal system, which plays a role in outer membrane invagination during cell division and is important for maintaining outer membrane integrity. The polypeptide is Tol-Pal system protein TolB (Orientia tsutsugamushi (strain Boryong) (Rickettsia tsutsugamushi)).